Here is a 311-residue protein sequence, read N- to C-terminus: NAD kinase (311 aa).

The Proton acceptor role is filled by Asp88. Residues 88-89, 162-163, Arg190, Asp192, Val200, and 203-208 contribute to the NAD(+) site; these read DG, NE, and TAHNLS.

It belongs to the NAD kinase family. A divalent metal cation is required as a cofactor.

Its subcellular location is the cytoplasm. It catalyses the reaction NAD(+) + ATP = ADP + NADP(+) + H(+). Involved in the regulation of the intracellular balance of NAD and NADP, and is a key enzyme in the biosynthesis of NADP. Catalyzes specifically the phosphorylation on 2'-hydroxyl of the adenosine moiety of NAD to yield NADP. This Rhodopirellula baltica (strain DSM 10527 / NCIMB 13988 / SH1) protein is NAD kinase.